We begin with the raw amino-acid sequence, 632 residues long: MSVYHAAYIDYALRVTENMTDVMTGSETVTLKSYQHFVSRVFLGLDKMHSLLLFHETGVGKTITTVFILKHLKDVYTNWIIILLVKKALVEDPWTYAITKYAPEILKDCIFITYDDKNFHNKFFTNIKTISSRTRLCIIIDECHNFISKSIIKEDGKQRPTKSVYNYLSKNVALHHHKLICLSATPIVNSVKEFVMLVNLLRPKILSNVSLFENKRLVNESELINKLGAICSYIVTNEFSIFDDVAGSSAFARKTVYFQYVNMTQKQEQVYQKAKLAELKAGISSFRIYRRMAATFTFDAFLDKTDKTPEEVANEQITLYKDFETFIKTKKFSEHALSQFKRGQSLGGTSSADDISFLNELRERSCKFTDVCLRILASPGKCLVFEPFVNQSGINILLLYFSAFNISYIEFSSRTKNTRVQSVAEFNKRENTDGDLIKTCVFSLSGGEGISFFSINDIFILDMTWNEASLRQIIGRAIRLNSHVLTPEHRRYVNVHFIVARLSNGDATVDEDLLDIIRTKSKEFTQLFKVFKHTSIEWIYEHQTDFSPVDNESGWSALISRSIDENPTTKRVPHVVKGQNIWYSHSNRLIAVYKGFKTDDGRLFDSDGNFIQTIQDNPVIKIHNDKLVYVLD.

A Helicase ATP-binding domain is found at 42–204 (FLGLDKMHSL…VMLVNLLRPK (163 aa)). Position 55–62 (55–62 (HETGVGKT)) interacts with ATP. The short motif at 141 to 144 (DECH) is the DEXH box element. The Helicase C-terminal domain maps to 367 to 532 (KFTDVCLRIL…EFTQLFKVFK (166 aa)). The tract at residues 457-524 (DIFILDMTWN…DIIRTKSKEF (68 aa)) is binding to the cap-specific mRNA (nucleoside-2'-O-)-methyltransferase.

Belongs to the helicase family. NPH I subfamily. Monomer. Interacts (via C-terminus) with RAP94 (via N-terminus). Interacts with the cap-specific mRNA (nucleoside-2'-O-)-methyltransferase.

The protein localises to the virion. The catalysed reaction is a ribonucleoside 5'-triphosphate + H2O = a ribonucleoside 5'-diphosphate + phosphate + H(+). Its function is as follows. DNA-dependent ATPase required for providing the needed energy to achieve the termination of early transcripts. Acts in concert with the RAP94 subunit of the virion RNA polymerase and the capping enzyme/VTF to catalyze release of UUUUUNU-containing nascent RNA from the elongation complex. NPH-I must bind ssDNA in order to exhibit ATPase activity. The chain is Nucleoside triphosphatase I (NPH1) from Myxoma virus (strain Lausanne) (MYXV).